The following is a 30-amino-acid chain: 136 kDa hydroxyproline-rich cell wall glycoprotein, major component (30 aa).

4-hydroxyproline occurs at positions 8, 9, 10, 11, 12, 17, 18, 19, 20, 26, 27, 28, and 29.

O-glycosylated.

Its subcellular location is the secreted. It is found in the cell wall. The sequence is that of 136 kDa hydroxyproline-rich cell wall glycoprotein, major component from Phaseolus vulgaris (Kidney bean).